We begin with the raw amino-acid sequence, 764 residues long: E3 ubiquitin-protein ligase CBL-B-B (764 aa).

Positions 1 to 19 (MASSSSSSSNSSTSSSALS) are enriched in low complexity. Residues 1 to 27 (MASSSSSSSNSSTSSSALSGRLPGARS) are disordered. Positions 48–180 (PPKQAAADRR…KAIFPSGQFQ (133 aa)) are 4H. In terms of domain architecture, Cbl-PTB spans 48–356 (PPKQAAADRR…GRSYNPDLTD (309 aa)). Residues 181 to 253 (GDTFRITKAD…FEFDIFARLF (73 aa)) form an EF-hand-like region. The Ca(2+) site is built by aspartate 234, threonine 236, asparagine 238, tyrosine 240, and glutamate 245. The tract at residues 254-356 (QPWSSILRNW…GRSYNPDLTD (103 aa)) is SH2-like. A 4-O-phospho-L-tyrosine-binding site is contributed by arginine 299. A linker region spans residues 357–385 (LCEPTPHDHIKVTQEQYELYCEMGSTFQL). Residues 386–425 (CKICAENDKDVKIEPCGHLMCTSCLTSWQESDGQGCPFCR) form an RING-type zinc finger. Disordered stretches follow at residues 482-583 (MNER…SRTC) and 707-726 (KVRNSAEEDDSEYKIPSSHP). Positions 485 to 498 (RQNSPVTSPGSSPL) are enriched in polar residues. The span at 556–578 (LPAPPPPLREPPPPPERPPPIPP) shows a compositional bias: pro residues.

In terms of assembly, interacts with several SH3 domain-containing proteins and with poly-ubiquitinated proteins.

It is found in the cytoplasm. The enzyme catalyses S-ubiquitinyl-[E2 ubiquitin-conjugating enzyme]-L-cysteine + [acceptor protein]-L-lysine = [E2 ubiquitin-conjugating enzyme]-L-cysteine + N(6)-ubiquitinyl-[acceptor protein]-L-lysine.. It functions in the pathway protein modification; protein ubiquitination. In terms of biological role, E3 ubiquitin-protein ligase which accepts ubiquitin from specific E2 ubiquitin-conjugating enzymes, and transfers it to substrates, generally promoting their degradation by the proteasome. The polypeptide is E3 ubiquitin-protein ligase CBL-B-B (cblb-b) (Xenopus laevis (African clawed frog)).